The chain runs to 269 residues: MAKRPVLEDVLDDEIDNMDMDIAQFDPSLRTPIAPVQPGPQITRSQDQEPPLFPNFPHPEQDKSVERKDIVDPNKFSAEERAELKKFQIIYPCYFDKSRSHKDGRRVSESKAVSNPLAKTISDACRHYNLPVMLELDKTHPQDFGNPGRVRVLIKDNNKNGMPVDSRFKTKRAVLNIIADYLKTHPTTLASIGPKSGIPLPSEYETGFEPGEIPKVKGFKMNTIVPVHSELTIKHPMTKSIYDPEPEQPQVKAPQAPKQPKKKVMKIRG.

Disordered stretches follow at residues Arg-30–Val-65 and Pro-236–Gly-269. Positions Gln-248–Lys-258 are enriched in low complexity. Residues Gln-259 to Gly-269 are compositionally biased toward basic residues.

The protein belongs to the SRP19 family. Fungal signal recognition particle consists of a 7S RNA molecule (scR1) and at least six protein subunits: SRP72, SRP68, SRP54, SEC65, SRP21 andSRP14.

It localises to the cytoplasm. Its function is as follows. Signal-recognition-particle assembly has a crucial role in targeting secretory proteins to the rough endoplasmic reticulum membrane. It must be involved intimately in the translocation of a wide variety of protein substrates. The chain is Signal recognition particle SEC65 subunit (SEC65) from Debaryomyces hansenii (strain ATCC 36239 / CBS 767 / BCRC 21394 / JCM 1990 / NBRC 0083 / IGC 2968) (Yeast).